The chain runs to 128 residues: KHDC1-like protein (128 aa).

It belongs to the KHDC1 family.

In Homo sapiens (Human), this protein is KHDC1-like protein (KHDC1L).